The primary structure comprises 462 residues: Cysteine--tRNA ligase (462 aa).

Cysteine 30 contacts Zn(2+). The 'HIGH' region motif lies at 32–42 (MTVYDYCHVGH). The Zn(2+) site is built by cysteine 214, histidine 239, and glutamate 243. Positions 271 to 275 (KMSKS) match the 'KMSKS' region motif. Lysine 274 is a binding site for ATP.

The protein belongs to the class-I aminoacyl-tRNA synthetase family. Monomer. The cofactor is Zn(2+).

The protein localises to the cytoplasm. It catalyses the reaction tRNA(Cys) + L-cysteine + ATP = L-cysteinyl-tRNA(Cys) + AMP + diphosphate. This is Cysteine--tRNA ligase from Cupriavidus pinatubonensis (strain JMP 134 / LMG 1197) (Cupriavidus necator (strain JMP 134)).